The sequence spans 144 residues: Large ribosomal subunit protein uL11 (144 aa).

Belongs to the universal ribosomal protein uL11 family. As to quaternary structure, part of the ribosomal stalk of the 50S ribosomal subunit. Interacts with L10 and the large rRNA to form the base of the stalk. L10 forms an elongated spine to which L12 dimers bind in a sequential fashion forming a multimeric L10(L12)X complex. One or more lysine residues are methylated.

Forms part of the ribosomal stalk which helps the ribosome interact with GTP-bound translation factors. This chain is Large ribosomal subunit protein uL11, found in Acidiphilium cryptum (strain JF-5).